A 597-amino-acid chain; its full sequence is Mediator of RNA polymerase II transcription subunit 26 (597 aa).

One can recognise a TFIIS N-terminal domain in the interval 10-87 (EIRERLLQAI…RNWQKLIEPV (78 aa)). Disordered regions lie at residues 96–236 (GIPN…VKHP), 254–418 (LDDA…ARVK), and 436–459 (TLKD…TDKQ). The span at 128-147 (QELKGRNDIQKAHSPKADKT) shows a compositional bias: basic and acidic residues. Positions 226 to 236 (HTNSPGLVKHP) are enriched in polar residues. Positions 262 to 273 (PRSPRCSSFSPR) are enriched in low complexity. Positions 321 to 338 (KRLESPRQDRVSSPHKPV) are enriched in basic and acidic residues. Residues 341–377 (LPSTDCHQVLPRTSQQHIPRSSLVDSQTPRTGFSPES) are compositionally biased toward polar residues. The span at 450–459 (EQHRTETDKQ) shows a compositional bias: basic and acidic residues.

It belongs to the Mediator complex subunit 26 family. In terms of assembly, component of the Mediator complex.

It is found in the nucleus. Its function is as follows. Component of the Mediator complex, a coactivator involved in the regulated transcription of nearly all RNA polymerase II-dependent genes. Mediator functions as a bridge to convey information from gene-specific regulatory proteins to the basal RNA polymerase II transcription machinery. Mediator is recruited to promoters by direct interactions with regulatory proteins and serves as a scaffold for the assembly of a functional preinitiation complex with RNA polymerase II and the general transcription factors. The polypeptide is Mediator of RNA polymerase II transcription subunit 26 (med26) (Xenopus laevis (African clawed frog)).